A 1162-amino-acid polypeptide reads, in one-letter code: Paired amphipathic helix protein Sin3-like 5 (1162 aa).

Residues M1–T37 form a disordered region. Polar residues predominate over residues T18 to S30. 2 PAH domains span residues R28–G109 and K123–F193. Disordered regions lie at residues R702–E727, Q743–N779, G803–G830, and K1121–R1143. The residue at position 817 (S817) is a Phosphoserine. The span at A1123–S1139 shows a compositional bias: polar residues.

Its subcellular location is the nucleus. Functionally, acts as a transcriptional repressor. Plays roles in regulating gene expression and genome stability. In Arabidopsis thaliana (Mouse-ear cress), this protein is Paired amphipathic helix protein Sin3-like 5 (SNL5).